The primary structure comprises 206 residues: FMN-dependent NADH:quinone oxidoreductase (206 aa).

Residues S9, 15-17 (SVS), 95-98 (MYNF), and 139-142 (SRGG) each bind FMN.

It belongs to the azoreductase type 1 family. Homodimer. It depends on FMN as a cofactor.

The enzyme catalyses 2 a quinone + NADH + H(+) = 2 a 1,4-benzosemiquinone + NAD(+). It catalyses the reaction N,N-dimethyl-1,4-phenylenediamine + anthranilate + 2 NAD(+) = 2-(4-dimethylaminophenyl)diazenylbenzoate + 2 NADH + 2 H(+). Its function is as follows. Quinone reductase that provides resistance to thiol-specific stress caused by electrophilic quinones. Also exhibits azoreductase activity. Catalyzes the reductive cleavage of the azo bond in aromatic azo compounds to the corresponding amines. The polypeptide is FMN-dependent NADH:quinone oxidoreductase (Legionella pneumophila subsp. pneumophila (strain Philadelphia 1 / ATCC 33152 / DSM 7513)).